Here is a 455-residue protein sequence, read N- to C-terminus: Bifunctional protein GlmU (455 aa).

The tract at residues 1 to 225 (MNIVILAAGM…EWETLGVNSK (225 aa)) is pyrophosphorylase. Residues 6 to 9 (LAAG), K20, Q71, 76 to 77 (GT), 98 to 100 (YGD), G135, E150, N165, and N223 each bind UDP-N-acetyl-alpha-D-glucosamine. D100 provides a ligand contact to Mg(2+). A Mg(2+)-binding site is contributed by N223. A linker region spans residues 226-246 (VQLAELERIHQRNLAQQLLED). Residues 247–455 (GVTLIDPARI…QRPVKQKKEG (209 aa)) are N-acetyltransferase. R329 and K347 together coordinate UDP-N-acetyl-alpha-D-glucosamine. H359 serves as the catalytic Proton acceptor. 2 residues coordinate UDP-N-acetyl-alpha-D-glucosamine: Y362 and N373. Acetyl-CoA contacts are provided by residues A376, 382-383 (NY), S401, A419, and R436.

The protein in the N-terminal section; belongs to the N-acetylglucosamine-1-phosphate uridyltransferase family. This sequence in the C-terminal section; belongs to the transferase hexapeptide repeat family. Homotrimer. The cofactor is Mg(2+).

The protein resides in the cytoplasm. It catalyses the reaction alpha-D-glucosamine 1-phosphate + acetyl-CoA = N-acetyl-alpha-D-glucosamine 1-phosphate + CoA + H(+). The enzyme catalyses N-acetyl-alpha-D-glucosamine 1-phosphate + UTP + H(+) = UDP-N-acetyl-alpha-D-glucosamine + diphosphate. Its pathway is nucleotide-sugar biosynthesis; UDP-N-acetyl-alpha-D-glucosamine biosynthesis; N-acetyl-alpha-D-glucosamine 1-phosphate from alpha-D-glucosamine 6-phosphate (route II): step 2/2. It functions in the pathway nucleotide-sugar biosynthesis; UDP-N-acetyl-alpha-D-glucosamine biosynthesis; UDP-N-acetyl-alpha-D-glucosamine from N-acetyl-alpha-D-glucosamine 1-phosphate: step 1/1. It participates in bacterial outer membrane biogenesis; LPS lipid A biosynthesis. Functionally, catalyzes the last two sequential reactions in the de novo biosynthetic pathway for UDP-N-acetylglucosamine (UDP-GlcNAc). The C-terminal domain catalyzes the transfer of acetyl group from acetyl coenzyme A to glucosamine-1-phosphate (GlcN-1-P) to produce N-acetylglucosamine-1-phosphate (GlcNAc-1-P), which is converted into UDP-GlcNAc by the transfer of uridine 5-monophosphate (from uridine 5-triphosphate), a reaction catalyzed by the N-terminal domain. The sequence is that of Bifunctional protein GlmU from Ralstonia pickettii (strain 12J).